The sequence spans 147 residues: Hemoglobin subunit beta (147 aa).

The Globin domain occupies 2-147; that stretch reads EWTDAERSAI…VVSALCRQYH (146 aa). Positions 63 and 92 each coordinate heme b.

The protein belongs to the globin family. As to quaternary structure, heterotetramer of two alpha chains and two beta chains. In terms of tissue distribution, red blood cells.

In terms of biological role, involved in oxygen transport from gills to the various peripheral tissues. The chain is Hemoglobin subunit beta (hbb) from Carassius auratus (Goldfish).